We begin with the raw amino-acid sequence, 292 residues long: Putative peptidyl-prolyl cis-trans isomerase NifM (292 aa).

Positions 148–243 constitute a PpiC domain; it reads HILVTINEDF…IGFHVLYCES (96 aa).

It belongs to the PpiC/parvulin rotamase family.

It carries out the reaction [protein]-peptidylproline (omega=180) = [protein]-peptidylproline (omega=0). Functionally, required for the activation and stabilization of the iron-component (NifH) of nitrogenase. Probable PPIase. In Azotobacter vinelandii, this protein is Putative peptidyl-prolyl cis-trans isomerase NifM (nifM).